Reading from the N-terminus, the 178-residue chain is PEST proteolytic signal-containing nuclear protein (178 aa).

Residues 1–15 show a composition bias toward basic and acidic residues; sequence MADGKAGEEKPEKSQ. The disordered stretch occupies residues 1-84; the sequence is MADGKAGEEK…IGSQTTKKAS (84 aa). Alanine 2 carries the N-acetylalanine modification. A compositionally biased stretch (low complexity) spans 37–47; that stretch reads SSSNGGESSSR. Serine 53 bears the Phosphoserine mark. N6-acetyllysine is present on lysine 64. 3 positions are modified to phosphoserine: serine 77, serine 87, and serine 119. Residues 134–178 form a disordered region; sequence NIGRDTPTSAGPNSFNKGKHGFSDNQKLWERNIKSHLGNVHDQDN. Threonine 139 is subject to Phosphothreonine. The span at 139 to 149 shows a compositional bias: polar residues; that stretch reads TPTSAGPNSFN. Residue serine 147 is modified to Phosphoserine. 2 positions are modified to N6-acetyllysine: lysine 150 and lysine 152. Residues 160-178 are compositionally biased toward basic and acidic residues; that stretch reads KLWERNIKSHLGNVHDQDN.

Interacts with UHRF2/NIRF. Post-translationally, ubiquitinated; mediated by UHRF2 and leading to its subsequent proteasomal degradation. N-terminally acetylated in a HYPK-dependent manner by the NatA acetyltransferase complex which is composed of NAA10 and NAA15.

It is found in the nucleus. Its function is as follows. May be involved in cell cycle regulation. The sequence is that of PEST proteolytic signal-containing nuclear protein (PCNP) from Pongo abelii (Sumatran orangutan).